A 336-amino-acid polypeptide reads, in one-letter code: MPPPAPGARLRLLAAAALAGLAVISRGLLSQSLEFSSPADNYTVCEGDNATLSCFIDEHVTRVAWLNRSNILYAGNDRWTSDPRVRLLINTPEEFSILITQVGLGDEGLYTCSFQTRHQPYTTQVYLIVHVPARIVNISSPVAVNEGGNVNLLCLAVGRPEPTVTWRQLRDGFTSEGEILEISDIQRGQAGEYECVTHNGVNSAPDSRRVLVTVNYPPTITDVTSARTALGRAALLRCEAMAVPPADFQWYKDDRLLSSGSAEGLKVQTERTRSMLLFANVSARHYGNYTCRAANRLGASSASMRLLRPGSLENSAPRPPGPLTLLSALSWLWWRM.

The signal sequence occupies residues 1 to 30 (MPPPAPGARLRLLAAAALAGLAVISRGLLS). 3 consecutive Ig-like C2-type domains span residues 33 to 122 (LEFS…QPYT), 132 to 213 (PARI…VLVT), and 218 to 307 (PTIT…MRLL). N-linked (GlcNAc...) asparagine glycans are attached at residues Asn41, Asn49, Asn67, and Asn137. Cys54 and Cys112 are disulfide-bonded. Intrachain disulfides connect Cys154–Cys195 and Cys238–Cys291. Asn288 carries N-linked (GlcNAc...) asparagine glycosylation.

It belongs to the immunoglobulin superfamily. IgLON family.

It is found in the secreted. The protein is IgLON family member 5 (Iglon5) of Mus musculus (Mouse).